A 351-amino-acid chain; its full sequence is Soluble interferon alpha/beta receptor OPG204 (351 aa).

Positions 1–19 (MTMKMMVHIYFVSLLLLLF) are cleaved as a signal peptide. Ig-like C2-type domains are found at residues 65 to 147 (LGEP…RSHI) and 155 to 237 (PKTY…IVVS). Intrachain disulfides connect cysteine 73-cysteine 129 and cysteine 172-cysteine 221. 5 N-linked (GlcNAc...) asparagine; by host glycosylation sites follow: asparagine 117, asparagine 182, asparagine 261, asparagine 269, and asparagine 321. Positions 246–345 (PSQDHRFKLI…HNYYFEKTLT (100 aa)) constitute an Ig-like V-type domain. A disulfide bridge links cysteine 272 with cysteine 333.

This sequence belongs to the interleukin-1 receptor family. Interacts with host IFNA1.

The protein resides in the secreted. Its function is as follows. Counteracts the antiviral effects of host IFN-alpha/beta and key IFN-inducible proteins involved in viral RNA degradation suxh as host OAS1. Acts as a soluble IFN-alpha receptor and thus inhibits the interaction between host IFN-alpha and its receptor. This Vaccinia virus (strain Western Reserve) (VACV) protein is Soluble interferon alpha/beta receptor OPG204 (OPG204).